Reading from the N-terminus, the 339-residue chain is MSMLMAVKTTSLCCSSLNLTASPTFRRNPRAARLVNPTARIQTRFHRLIEEQGIVLMPGCYDALSAAIVQQTGFSAGFISGYALSASLLGKPDFGLLTPPEMAATARSVCASAPNIPIIADADTGGGNALNIQRTVKDLIAAGAAGCFLEDQAWPKKCGHMRGKQVIPAEEHAAKIASARDAIGDSDFFLVARTDVRATSAKSGLEDAIARVNLYMEAGADASFVEAPRDDDELKEIGKRTKGYRVCNMIEGGVTPLHTPDELKEMGFHLIVHPLTALYASTRALVDVLKTLKENGSTRDHLQKMATFEEFNSLVDLDSWFELEARYSNLRNALGTTKS.

The N-terminal 30 residues, 1–30, are a transit peptide targeting the chloroplast; it reads MSMLMAVKTTSLCCSSLNLTASPTFRRNPR.

Belongs to the isocitrate lyase/PEP mutase superfamily.

It is found in the plastid. The protein localises to the chloroplast. The catalysed reaction is 1-carboxyvinyl carboxyphosphonate + H(+) = 3-(hydrohydroxyphosphoryl)pyruvate + CO2. In Arabidopsis thaliana (Mouse-ear cress), this protein is Carboxyvinyl-carboxyphosphonate phosphorylmutase, chloroplastic.